Consider the following 503-residue polypeptide: Alpha-1-syntrophin (503 aa).

2 consecutive PH domains span residues 6-263 (RAPR…AQIG) and 287-399 (DIKQ…DGCH). The tract at residues 40-68 (LTVSPADGEPGPEPEPAQLNGAAEPGAAP) is disordered. In terms of domain architecture, PDZ spans 81–164 (RVTVRKADAG…EVVLEVKYMK (84 aa)). A phosphoserine mark is found at Ser95, Ser178, Ser183, Ser187, and Ser194. Positions 177–203 (TSVGWDSPPASPLQRQPSSPGPQPRNL) are disordered. Residues 447 to 503 (PFEKLQMSSDDGTSLLFLDFGGAEGEIQLDLHSCPKTMVFIIHSFLSAKVTRLGLLA) form the SU domain. The calmodulin-binding stretch occupies residues 481–503 (PKTMVFIIHSFLSAKVTRLGLLA).

The protein belongs to the syntrophin family. Monomer and homodimer. Interacts with MAPK12, TGFA, GA and F-actin. Interacts with the other members of the syntrophin family: SNTB1 and SNTB2; with dystrophin protein DMD and related proteins DTNA and UTRN; SGCG and SGCA of the dystrophin glycoprotein complex; NOS1; GRB2; calmodulin and the sodium channel proteins SCN4A and SCN5A. Interacts with MYOC; regulates muscle hypertrophy. Interacts with DTNB. Post-translationally, phosphorylated by CaM-kinase II. Phosphorylation may inhibit the interaction with DMD. In terms of tissue distribution, high expression in skeletal muscle. Expressed at intermediate level in heart, kidney and brain, and at low level in intestine, liver, lung and testis.

The protein resides in the cell membrane. It is found in the sarcolemma. It localises to the cell junction. The protein localises to the cytoplasm. Its subcellular location is the cytoskeleton. Adapter protein that binds to and probably organizes the subcellular localization of a variety of membrane proteins. May link various receptors to the actin cytoskeleton and the extracellular matrix via the dystrophin glycoprotein complex. Plays an important role in synapse formation and in the organization of UTRN and acetylcholine receptors at the neuromuscular synapse. Binds to phosphatidylinositol 4,5-bisphosphate. This chain is Alpha-1-syntrophin (Snta1), found in Mus musculus (Mouse).